The chain runs to 200 residues: MTRLLIVGPPGAGKGTQAKRIASEYGIPDVSTGDIFRQNIKDRTELGQQVQALVDAGNYVPDELTNRLVTARLQEEDARAGFLLDGYPRTLAQVAYLEELLQGWGQELDAVIQLVADEDEVVARLTRRAAEQGRADDGEEEIRHRQEVYVRETSPLIDVYRERGLLLEVDGLGEVDEVAERIRAALAGRGVRPSSDAGRA.

An ATP-binding site is contributed by 11–16; that stretch reads GAGKGT. Positions 31–60 are NMP; sequence STGDIFRQNIKDRTELGQQVQALVDAGNYV. AMP is bound by residues T32, R37, 58–60, 86–89, and Q93; these read NYV and GYPR. Positions 127-137 are LID; it reads RRAAEQGRADD. Residue R128 participates in ATP binding. AMP-binding residues include R134 and R145. Position 173 (G173) interacts with ATP.

Belongs to the adenylate kinase family. Monomer.

The protein localises to the cytoplasm. It catalyses the reaction AMP + ATP = 2 ADP. It participates in purine metabolism; AMP biosynthesis via salvage pathway; AMP from ADP: step 1/1. Functionally, catalyzes the reversible transfer of the terminal phosphate group between ATP and AMP. Plays an important role in cellular energy homeostasis and in adenine nucleotide metabolism. The protein is Adenylate kinase of Clavibacter michiganensis subsp. michiganensis (strain NCPPB 382).